The following is a 277-amino-acid chain: Chitosanase (277 aa).

The N-terminal stretch at 1–35 is a signal peptide; the sequence is MKISMQKADFWKKAAISLLVFTMFFTLMMSETVFA. Glu-54 acts as the Proton donor in catalysis. The active-site Nucleophile is the Asp-70.

The protein belongs to the glycosyl hydrolase 46 family.

It is found in the secreted. It carries out the reaction Endohydrolysis of beta-(1-&gt;4)-linkages between D-glucosamine residues in a partly acetylated chitosan.. Aids in the defense against invading fungal pathogens by degrading their cell wall chitosan. This is Chitosanase (csn) from Bacillus subtilis (strain 168).